The sequence spans 149 residues: Transcriptional repressor NrdR (149 aa).

A zinc finger lies at 3–34 (CPFCSATDTKVIDSRLVADGHQVRRRRECVQC). Positions 49 to 139 (PRVVKQDGSR…VYRAFEDVSE (91 aa)) constitute an ATP-cone domain.

This sequence belongs to the NrdR family. Zn(2+) is required as a cofactor.

Negatively regulates transcription of bacterial ribonucleotide reductase nrd genes and operons by binding to NrdR-boxes. The chain is Transcriptional repressor NrdR from Shewanella pealeana (strain ATCC 700345 / ANG-SQ1).